Here is a 587-residue protein sequence, read N- to C-terminus: ATP-dependent lipid A-core flippase (587 aa).

5 helical membrane passes run 31–51 (LIASGIALVFNALADSGLIYL), 68–88 (LKIMAFVVVGMIILRGVTNFI), 145–165 (GSLITIVREGAYIISLLAVMF), 169–189 (WELTLVLFVIGPIIAVLITIV), and 259–279 (VQIIASLALVAVLFLATTPLI). One can recognise an ABC transmembrane type-1 domain in the interval 32-315 (IASGIALVFN…LTNVNSQFQR (284 aa)). The ABC transporter domain occupies 347–583 (LEFKNVSFAY…NGAYKQLYSM (237 aa)). 381–388 (GRSGSGKS) lines the ATP pocket.

Belongs to the ABC transporter superfamily. Lipid exporter (TC 3.A.1.106) family. As to quaternary structure, homodimer.

The protein localises to the cell inner membrane. The catalysed reaction is ATP + H2O + lipid A-core oligosaccharideSide 1 = ADP + phosphate + lipid A-core oligosaccharideSide 2.. Functionally, involved in lipopolysaccharide (LPS) biosynthesis. Translocates lipid A-core from the inner to the outer leaflet of the inner membrane. Transmembrane domains (TMD) form a pore in the inner membrane and the ATP-binding domain (NBD) is responsible for energy generation. The polypeptide is ATP-dependent lipid A-core flippase (Haemophilus influenzae (strain 86-028NP)).